The sequence spans 386 residues: 1-deoxy-D-xylulose 5-phosphate reductoisomerase (386 aa).

Residues Thr10, Gly11, Ser12, Ile13, Gly36, Asn38, and Asn122 each contribute to the NADPH site. Position 123 (Lys123) interacts with 1-deoxy-D-xylulose 5-phosphate. NADPH is bound at residue Glu124. Asp148 is a Mn(2+) binding site. 1-deoxy-D-xylulose 5-phosphate is bound by residues Ser149, Glu150, Ser174, and His197. Glu150 contributes to the Mn(2+) binding site. Gly203 is a binding site for NADPH. 1-deoxy-D-xylulose 5-phosphate-binding residues include Ser210, Asn215, Lys216, and Glu219. Glu219 is a Mn(2+) binding site.

The protein belongs to the DXR family. Mg(2+) serves as cofactor. Requires Mn(2+) as cofactor.

It catalyses the reaction 2-C-methyl-D-erythritol 4-phosphate + NADP(+) = 1-deoxy-D-xylulose 5-phosphate + NADPH + H(+). Its pathway is isoprenoid biosynthesis; isopentenyl diphosphate biosynthesis via DXP pathway; isopentenyl diphosphate from 1-deoxy-D-xylulose 5-phosphate: step 1/6. Its function is as follows. Catalyzes the NADPH-dependent rearrangement and reduction of 1-deoxy-D-xylulose-5-phosphate (DXP) to 2-C-methyl-D-erythritol 4-phosphate (MEP). This chain is 1-deoxy-D-xylulose 5-phosphate reductoisomerase, found in Geotalea uraniireducens (strain Rf4) (Geobacter uraniireducens).